Consider the following 248-residue polypeptide: Peptidyl-prolyl cis-trans isomerase, chloroplastic (248 aa).

The PPIase cyclophilin-type domain occupies 85–243 (FFDIEIGGES…KPCKIAKSGE (159 aa)). Residues 223–248 (QETSKLDNSPKKPCKIAKSGELPLDG) form a disordered region.

Belongs to the cyclophilin-type PPIase family. Highly expressed in leaf.

The protein localises to the plastid. The protein resides in the chloroplast stroma. The catalysed reaction is [protein]-peptidylproline (omega=180) = [protein]-peptidylproline (omega=0). Its activity is regulated as follows. Binds cyclosporin A (CsA). CsA mediates some of its effects via an inhibitory action on PPIase. PPIases accelerate the folding of proteins. It catalyzes the cis-trans isomerization of proline imidic peptide bonds in oligopeptides. This Vicia faba (Broad bean) protein is Peptidyl-prolyl cis-trans isomerase, chloroplastic.